The following is a 968-amino-acid chain: Translation initiation factor IF-2 (968 aa).

Over residues 51-76 (PAAGASKSEAPAAAPKAPASPAATRP) the composition is skewed to low complexity. The tract at residues 51–369 (PAAGASKSEA…GVSVPRGDGN (319 aa)) is disordered. Positions 77 to 87 (APAPGPAAPKA) are enriched in pro residues. Residues 93-102 (EAPAAASAPS) show a composition bias toward low complexity. Residues 103–112 (APAPAAPAPA) are compositionally biased toward pro residues. Low complexity-rich tracts occupy residues 113 to 122 (APAAAASAPS), 128 to 170 (APST…GNNP), and 239 to 254 (GARPGAPRPAGAPGAR). A compositionally biased stretch (gly residues) spans 281–336 (GRPGGGGRGPGRPGGAPGTGGAPGAGGGAPAGGGFGKGGRGRGGTQGAFGKGGAGR). Over residues 337 to 346 (GKQRKSKRAK) the composition is skewed to basic residues. Residues 461-632 (ARPPVVTVMG…AVLLTADAAL (172 aa)) enclose the tr-type G domain. The G1 stretch occupies residues 470 to 477 (GHVDHGKT). 470–477 (GHVDHGKT) is a GTP binding site. The interval 495–499 (GITQH) is G2. The G3 stretch occupies residues 520–523 (DTPG). Residues 520-524 (DTPGH) and 574-577 (NKID) contribute to the GTP site. The G4 stretch occupies residues 574–577 (NKID). The tract at residues 610–612 (SAR) is G5.

The protein belongs to the TRAFAC class translation factor GTPase superfamily. Classic translation factor GTPase family. IF-2 subfamily.

Its subcellular location is the cytoplasm. In terms of biological role, one of the essential components for the initiation of protein synthesis. Protects formylmethionyl-tRNA from spontaneous hydrolysis and promotes its binding to the 30S ribosomal subunits. Also involved in the hydrolysis of GTP during the formation of the 70S ribosomal complex. The chain is Translation initiation factor IF-2 from Arthrobacter sp. (strain FB24).